A 379-amino-acid chain; its full sequence is MKILRKNHPLLKIINHSFIDLPTPSNISSWWNFGSLLGMCLVIQILTGLFLAMHYTSDTTTAFSSVAHICRDVNYGWLIRYLHANGASMFFICLFIHVGRGIYYGSYVLSETWNIGIILFLTTMATAFVGYVLPWGQMSFWGATVITNLLSAIPYIGSTLVEWIWGGFSVDKATLTRFFAFHFILPFIIAAFALVHLLFLHETGSNNPSGLNSDSDKIPFHPYYTTKDLLGIFLLLLVLMILALFFPDILGDPDNFTPANPLNTPAHXXPXXXXLFAYAILRSIPNKLGGVLALILSILILAAFPLLNTSKQHGLIFRPVTQVIYWXXIANLLVLTWIGGQPVEYPFTMIGQIASITYFAIXIILIPVSNTIENNIIKL.

The next 4 helical transmembrane spans lie at 33–53 (FGSL…FLAM), 77–98 (WLIR…FIHV), 113–133 (WNIG…GYVL), and 178–198 (FFAF…VHLL). Residues His-83 and His-97 each contribute to the heme b site. Residues His-182 and His-196 each coordinate heme b. His-201 is a binding site for a ubiquinone. Helical transmembrane passes span 226–246 (TKDL…ALFF), 288–308 (LGGV…PLLN), 320–340 (VTQV…WIGG), and 347–367 (FTMI…ILIP).

The protein belongs to the cytochrome b family. The cytochrome bc1 complex contains 11 subunits: 3 respiratory subunits (MT-CYB, CYC1 and UQCRFS1), 2 core proteins (UQCRC1 and UQCRC2) and 6 low-molecular weight proteins (UQCRH/QCR6, UQCRB/QCR7, UQCRQ/QCR8, UQCR10/QCR9, UQCR11/QCR10 and a cleavage product of UQCRFS1). This cytochrome bc1 complex then forms a dimer. Requires heme b as cofactor.

It is found in the mitochondrion inner membrane. Its function is as follows. Component of the ubiquinol-cytochrome c reductase complex (complex III or cytochrome b-c1 complex) that is part of the mitochondrial respiratory chain. The b-c1 complex mediates electron transfer from ubiquinol to cytochrome c. Contributes to the generation of a proton gradient across the mitochondrial membrane that is then used for ATP synthesis. This chain is Cytochrome b (MT-CYB), found in Akodon lutescens puer (Altiplano grass mouse).